The following is a 309-amino-acid chain: Elongation factor Ts (309 aa).

The interval 82 to 85 (TDFV) is involved in Mg(2+) ion dislocation from EF-Tu.

This sequence belongs to the EF-Ts family.

Its subcellular location is the cytoplasm. Associates with the EF-Tu.GDP complex and induces the exchange of GDP to GTP. It remains bound to the aminoacyl-tRNA.EF-Tu.GTP complex up to the GTP hydrolysis stage on the ribosome. This chain is Elongation factor Ts (tsf), found in Rickettsia prowazekii (strain Madrid E).